A 214-amino-acid chain; its full sequence is Ribonuclease HII (214 aa).

The region spanning 26-214 is the RNase H type-2 domain; sequence EIVCGVDEAG…PVREAFDLIR (189 aa). A divalent metal cation is bound by residues Asp32, Glu33, and Asp124.

Belongs to the RNase HII family. Mn(2+) is required as a cofactor. It depends on Mg(2+) as a cofactor.

It is found in the cytoplasm. It carries out the reaction Endonucleolytic cleavage to 5'-phosphomonoester.. In terms of biological role, endonuclease that specifically degrades the RNA of RNA-DNA hybrids. The polypeptide is Ribonuclease HII (Burkholderia thailandensis (strain ATCC 700388 / DSM 13276 / CCUG 48851 / CIP 106301 / E264)).